A 260-amino-acid polypeptide reads, in one-letter code: UPF0246 protein Veis_4789 (260 aa).

This sequence belongs to the UPF0246 family.

The protein is UPF0246 protein Veis_4789 of Verminephrobacter eiseniae (strain EF01-2).